Consider the following 794-residue polypeptide: Protein SPA1-RELATED 4 (794 aa).

A Protein kinase domain is found at 1 to 268; it reads MKGSSESSSR…MSELLQSEFI (268 aa). A disordered region spans residues 126–165; the sequence is SCSDSGSDEDATTKSREIGSSRQEEILSERRSKQQEEVKK. Over residues 136-165 the composition is skewed to basic and acidic residues; it reads ATTKSREIGSSRQEEILSERRSKQQEEVKK. A coiled-coil region spans residues 272–326; that stretch reads RENLEEREAAMELRDRIEEQELLLEFLFLIQQRKQEAADKLQDTISLLSSDIDQV. Disordered regions lie at residues 352–373 and 428–447; these read QGAE…EESK and GRSS…INDS. Over residues 358–369 the composition is skewed to acidic residues; it reads AAEEENDDNSID. 7 WD repeats span residues 482-521, 531-571, 574-614, 616-656, 660-698, 707-746, and 762-794; these read NSSN…KDGR, ASRS…LVTE, EHEK…SIGT, KTKA…LPLC, GHHK…SGIN, GHTN…PVLS, and DASQ…LEMV. A DWD box motif is present at residues 635 to 649; sequence AFGSADHKVYYYDLR.

In terms of assembly, interacts with COP1 and CO. Binds to CRY1 in response to blue light, this interaction prevents SPA1/COP1 complex formation and thus avoid COP1-dependent degradation of the transcription factor HY5 by the proteasome and promotes hypocotyl elongation.

The protein resides in the nucleus. In terms of biological role, repressor of photomorphogenesis in the light. Probably part of the COP1/SPA E3 ubiquitin-protein ligase complex. The protein is Protein SPA1-RELATED 4 (SPA4) of Arabidopsis thaliana (Mouse-ear cress).